The chain runs to 206 residues: Tetrathionate response regulatory protein TtrR (206 aa).

A Response regulatory domain is found at 3-117 (TIHLLDDDTA…PLQAALERAL (115 aa)). D52 is modified (4-aspartylphosphate). An HTH luxR-type domain is found at 134 to 194 (QQLTPKEREL…ELIRRFEKMA (61 aa)). A DNA-binding region (H-T-H motif) is located at residues 153–172 (NREIAEAMNIAVRTVEVHRA).

In terms of processing, phosphorylated by TtrS.

Its subcellular location is the cytoplasm. Functionally, member of the two-component regulatory system TtrR/TtrS, which is required for synthesis of tetrathionate reductase. Positively regulates transcription of the ttrBCA operon. During mice infection, the ability to use tetrathionate as an electron acceptor is a growth advantage for S.typhimurium over the competing microbiota in the lumen of the inflamed gut. This Salmonella typhimurium (strain LT2 / SGSC1412 / ATCC 700720) protein is Tetrathionate response regulatory protein TtrR (ttrR).